A 353-amino-acid polypeptide reads, in one-letter code: Cyclic GMP-AMP synthase-like receptor (353 aa).

ATP contacts are provided by residues S60 and 72–74 (EYD). Residues E72, D74, and D183 each coordinate Mg(2+). D183 lines the GTP pocket. An ATP-binding site is contributed by K245. Mn(2+) contacts are provided by L269 and E270.

This sequence belongs to the mab-21 family. It depends on Mg(2+) as a cofactor. Requires Mn(2+) as cofactor.

The enzyme catalyses GTP + ATP = 2',3'-cGAMP + 2 diphosphate. The catalysed reaction is GTP + ATP = pppGp(2'-5')A + diphosphate. It catalyses the reaction pppGp(2'-5')A = 2',3'-cGAMP + diphosphate. Nucleotidyltransferase that catalyzes the formation of cyclic GMP-AMP (2',3'-cGAMP) from ATP and GTP and plays a key role in innate immunity. Acts as a key sensor of double-stranded RNA (dsRNA), the presence of dsRNA in the cytoplasm being a danger signal that triggers the immune responses. Directly binds dsRNA, activating the nucleotidyltransferase activity, leading to synthesis of 2',3'-cGAMP, a second messenger that binds to and activates Sting, thereby triggering the immune response via activation of the NF-kappa-B transcription factor. The sequence is that of Cyclic GMP-AMP synthase-like receptor from Nicrophorus vespilloides (Boreal carrion beetle).